The primary structure comprises 95 residues: Non-specific lipid-transfer protein (95 aa).

3 cysteine pairs are disulfide-bonded: Cys-4–Cys-52, Cys-14–Cys-29, and Cys-50–Cys-90.

It belongs to the plant LTP family. As to expression, seeds.

Its function is as follows. Plant non-specific lipid-transfer proteins transfer phospholipids as well as galactolipids across membranes. May play a role in wax or cutin deposition in the cell walls of expanding epidermal cells and certain secretory tissues. This chain is Non-specific lipid-transfer protein, found in Eleusine coracana (Indian finger millet).